The chain runs to 295 residues: 4-diphosphocytidyl-2-C-methyl-D-erythritol kinase (295 aa).

Lysine 18 is a catalytic residue. 101 to 111 is a binding site for ATP; it reads PMGGGIGGGSS. The active site involves aspartate 143.

The protein belongs to the GHMP kinase family. IspE subfamily.

The catalysed reaction is 4-CDP-2-C-methyl-D-erythritol + ATP = 4-CDP-2-C-methyl-D-erythritol 2-phosphate + ADP + H(+). It participates in isoprenoid biosynthesis; isopentenyl diphosphate biosynthesis via DXP pathway; isopentenyl diphosphate from 1-deoxy-D-xylulose 5-phosphate: step 3/6. In terms of biological role, catalyzes the phosphorylation of the position 2 hydroxy group of 4-diphosphocytidyl-2C-methyl-D-erythritol. This chain is 4-diphosphocytidyl-2-C-methyl-D-erythritol kinase, found in Vibrio vulnificus (strain YJ016).